The primary structure comprises 32 residues: Basic phospholipase A2 (32 aa).

Ca(2+) is bound by residues Tyr26, Gly28, and Gly30.

The protein belongs to the phospholipase A2 family. Group II subfamily. Ca(2+) is required as a cofactor. Expressed by the venom gland.

The protein localises to the secreted. It catalyses the reaction a 1,2-diacyl-sn-glycero-3-phosphocholine + H2O = a 1-acyl-sn-glycero-3-phosphocholine + a fatty acid + H(+). Functionally, snake venom phospholipase A2 (PLA2) that inhibits neuromuscular transmission by blocking acetylcholine release from the nerve termini. PLA2 catalyzes the calcium-dependent hydrolysis of the 2-acyl groups in 3-sn-phosphoglycerides. In Gloydius halys (Chinese water mocassin), this protein is Basic phospholipase A2.